A 188-amino-acid polypeptide reads, in one-letter code: Transmembrane protein 160 (188 aa).

Residues 1–96 (MGGGWWWARV…ISFMQSDMGR (96 aa)) constitute a mitochondrion transit peptide. The disordered stretch occupies residues 21–53 (SLQPPQRPRSGGARGSFAPGHGPRAGASPPPVS). Position 48 is a phosphoserine (serine 48). Helical transmembrane passes span 102–122 (FFLL…VGLA) and 135–155 (AAAG…AVGL). Residues 168–188 (PEDDGAASTEGPDEAGRPPPE) form a disordered region.

This sequence belongs to the TMEM160 family. Expressed in peripheral sensory neurons of dorsal root ganglia (DRG).

Its subcellular location is the mitochondrion inner membrane. This is Transmembrane protein 160 from Mus musculus (Mouse).